A 91-amino-acid chain; its full sequence is Probable Fe(2+)-trafficking protein (91 aa).

Belongs to the Fe(2+)-trafficking protein family.

In terms of biological role, could be a mediator in iron transactions between iron acquisition and iron-requiring processes, such as synthesis and/or repair of Fe-S clusters in biosynthetic enzymes. In Actinobacillus pleuropneumoniae serotype 5b (strain L20), this protein is Probable Fe(2+)-trafficking protein.